The sequence spans 364 residues: Pre-mRNA-splicing factor SLT11 (364 aa).

Residues Lys331 to Ile364 are disordered. Basic residues predominate over residues Asp339–Ile364.

This sequence belongs to the SLT11 family. As to quaternary structure, belongs to the CWC complex (or CEF1-associated complex), a spliceosome subcomplex composed of the U2, U5 and U6 snRNAs and at least BUD13, BUD31, BRR2, CDC40, CEF1, CLF1, CUS1, CWC2, CWC15, CWC21, CWC22, CWC23, CWC24, CWC25, CWC27, ECM2, HSH155, IST3, ISY1, LEA1, MSL1, NTC20, PRP8, PRP9, PRP11, PRP19, PRP21, PRP22, PRP45, PRP46, SLU7, SMB1, SMD1, SMD2, SMD3, SMX2, SMX3, SNT309, SNU114, SPP2, SYF1, SYF2, RSE1 and YJU2. Interacts with SLU7.

It is found in the nucleus. Its function is as follows. Involved in pre-mRNA splicing. Facilitates the cooperative formation of U2/U6 helix II in association with stem II in the spliceosome. Binds to RNA. The chain is Pre-mRNA-splicing factor SLT11 (ECM2) from Saccharomyces cerevisiae (strain ATCC 204508 / S288c) (Baker's yeast).